The following is a 394-amino-acid chain: 1-deoxy-D-xylulose 5-phosphate reductoisomerase (394 aa).

NADPH contacts are provided by Thr12, Gly13, Ser14, Ile15, Gly38, and Asn126. Lys127 is a 1-deoxy-D-xylulose 5-phosphate binding site. Residue Glu128 participates in NADPH binding. Asp151 contributes to the Mn(2+) binding site. 1-deoxy-D-xylulose 5-phosphate contacts are provided by Ser152, Glu153, Ser177, and His200. Glu153 contributes to the Mn(2+) binding site. Residue Gly206 coordinates NADPH. Residues Ser213, Asn218, Lys219, and Glu222 each contribute to the 1-deoxy-D-xylulose 5-phosphate site. Residue Glu222 participates in Mn(2+) binding.

Belongs to the DXR family. Mg(2+) is required as a cofactor. The cofactor is Mn(2+).

It catalyses the reaction 2-C-methyl-D-erythritol 4-phosphate + NADP(+) = 1-deoxy-D-xylulose 5-phosphate + NADPH + H(+). The protein operates within isoprenoid biosynthesis; isopentenyl diphosphate biosynthesis via DXP pathway; isopentenyl diphosphate from 1-deoxy-D-xylulose 5-phosphate: step 1/6. Catalyzes the NADPH-dependent rearrangement and reduction of 1-deoxy-D-xylulose-5-phosphate (DXP) to 2-C-methyl-D-erythritol 4-phosphate (MEP). The protein is 1-deoxy-D-xylulose 5-phosphate reductoisomerase of Beutenbergia cavernae (strain ATCC BAA-8 / DSM 12333 / CCUG 43141 / JCM 11478 / NBRC 16432 / NCIMB 13614 / HKI 0122).